The primary structure comprises 432 residues: 3-phosphoshikimate 1-carboxyvinyltransferase (432 aa).

Lysine 23, serine 24, and arginine 28 together coordinate 3-phosphoshikimate. Lysine 23 contributes to the phosphoenolpyruvate binding site. Residues glycine 95 and arginine 123 each coordinate phosphoenolpyruvate. 3-phosphoshikimate is bound by residues serine 167, glutamine 169, aspartate 317, and lysine 344. Position 169 (glutamine 169) interacts with phosphoenolpyruvate. Aspartate 317 functions as the Proton acceptor in the catalytic mechanism. Positions 348 and 390 each coordinate phosphoenolpyruvate.

This sequence belongs to the EPSP synthase family. Monomer.

It localises to the cytoplasm. The enzyme catalyses 3-phosphoshikimate + phosphoenolpyruvate = 5-O-(1-carboxyvinyl)-3-phosphoshikimate + phosphate. It functions in the pathway metabolic intermediate biosynthesis; chorismate biosynthesis; chorismate from D-erythrose 4-phosphate and phosphoenolpyruvate: step 6/7. Functionally, catalyzes the transfer of the enolpyruvyl moiety of phosphoenolpyruvate (PEP) to the 5-hydroxyl of shikimate-3-phosphate (S3P) to produce enolpyruvyl shikimate-3-phosphate and inorganic phosphate. The chain is 3-phosphoshikimate 1-carboxyvinyltransferase from Staphylococcus aureus (strain Newman).